Consider the following 729-residue polypeptide: Carbon monoxide dehydrogenase/acetyl-CoA synthase subunit alpha (729 aa).

Cys-506, Cys-509, Cys-518, and Cys-528 together coordinate [4Fe-4S] cluster. Cys-509 is a Ni(2+) binding site. 3 residues coordinate Ni(2+): Cys-595, Gly-596, and Cys-597.

Tetramer of two alpha and two beta chains. Requires Ni cation as cofactor. It depends on [4Fe-4S] cluster as a cofactor.

The catalysed reaction is Co(I)-[corrinoid Fe-S protein] + acetyl-CoA + H(+) = methyl-Co(III)-[corrinoid Fe-S protein] + CO + CoA. The beta subunit generates CO from CO(2), while the alpha subunit (this protein) combines the CO with CoA and a methyl group to form acetyl-CoA. The methyl group, which is incorporated into acetyl-CoA, is transferred to the alpha subunit by a corrinoid iron-sulfur protein. The sequence is that of Carbon monoxide dehydrogenase/acetyl-CoA synthase subunit alpha from Moorella thermoacetica (Clostridium thermoaceticum).